The primary structure comprises 460 residues: Alpha-amylase (460 aa).

The first 21 residues, 1–21, serve as a signal peptide directing secretion; it reads MASRTLSGALALAAAATAVLA. Ca(2+)-binding residues include Asn-121, Gln-167, and Asp-176. Residue Asp-206 is the Nucleophile of the active site. Position 210 (His-210) interacts with Ca(2+). The active-site Proton donor is Glu-233.

This sequence belongs to the glycosyl hydrolase 13 family. In terms of assembly, monomer. Requires Ca(2+) as cofactor.

It carries out the reaction Endohydrolysis of (1-&gt;4)-alpha-D-glucosidic linkages in polysaccharides containing three or more (1-&gt;4)-alpha-linked D-glucose units.. The sequence is that of Alpha-amylase (amy) from Streptomyces thermoviolaceus.